We begin with the raw amino-acid sequence, 204 residues long: Holliday junction resolvase RecU (204 aa).

The tract at residues 1 to 24 is disordered; it reads MTIHYPNGQQPVQHYNTHNELPTP. The span at 7–24 shows a compositional bias: polar residues; that stretch reads NGQQPVQHYNTHNELPTP. Positions 87, 89, 102, and 121 each coordinate Mg(2+).

It belongs to the RecU family. The cofactor is Mg(2+).

It is found in the cytoplasm. The enzyme catalyses Endonucleolytic cleavage at a junction such as a reciprocal single-stranded crossover between two homologous DNA duplexes (Holliday junction).. In terms of biological role, endonuclease that resolves Holliday junction intermediates in genetic recombination. Cleaves mobile four-strand junctions by introducing symmetrical nicks in paired strands. Promotes annealing of linear ssDNA with homologous dsDNA. Required for DNA repair, homologous recombination and chromosome segregation. The protein is Holliday junction resolvase RecU of Limosilactobacillus reuteri (strain DSM 20016) (Lactobacillus reuteri).